The sequence spans 372 residues: Ciliary neurotrophic factor receptor subunit alpha (372 aa).

The N-terminal stretch at 1–22 is a signal peptide; sequence MAAPVPWACCAVLAAAAAVVYA. The Ig-like C2-type domain occupies 27–104; it reads PQEAPHVQYE…WHLRHQVLLH (78 aa). Cysteine 46 and cysteine 89 form a disulfide bridge. Residues asparagine 60, asparagine 70, asparagine 142, and asparagine 190 are each glycosylated (N-linked (GlcNAc...) asparagine). Fibronectin type-III domains are found at residues 108-205 and 206-306; these read PPRE…VKPD and PPEN…TEEP. The short motif at 290 to 294 is the WSXWS motif element; sequence WSDWS. The interval 301-340 is disordered; sequence PWTEEPRHLTTEAQAPETTTSTTSSLAPPPTTKICDPGEL. A compositionally biased stretch (low complexity) spans 311–326; that stretch reads TEAQAPETTTSTTSSL. Serine 342 is lipidated: GPI-anchor amidated serine. Positions 343–372 are cleaved as a propeptide — removed in mature form; the sequence is GGGPSAPFLIHVPVTLALAAAAATANSLLI.

It belongs to the type I cytokine receptor family. Type 3 subfamily. In terms of assembly, forms a heterotrimer with LIFR and IL6ST. Interacts with heterodimeric neurotropic cytokine composed of CLCF1/CLC and CRLF1/CLF-1. Either alone or in complex with the heterodimer CLCF1-CRLF1 interacts with SORL1; this interaction may promote internalization and lysosomal degradation. In terms of tissue distribution, expressed in retina, brain, spleen, lung, liver and kidney. In the retina it is highly expressed by photoreceptors, but also found in the RPE, inner nuclear layer and ganglion cells.

The protein resides in the cell membrane. Its function is as follows. Binds to CNTF. The alpha subunit provides the receptor specificity. This is Ciliary neurotrophic factor receptor subunit alpha (CNTFR) from Canis lupus familiaris (Dog).